The sequence spans 203 residues: Small ribosomal subunit protein uS4 (203 aa).

Residues 15-46 are disordered; sequence LGENIWGRPKSSVNRRSYGPGQHGQRRKSKVS. One can recognise an S4 RNA-binding domain in the interval 94–154; sequence QRLDMVVYRA…KKAKEMALIA (61 aa).

The protein belongs to the universal ribosomal protein uS4 family. As to quaternary structure, part of the 30S ribosomal subunit. Contacts protein S5. The interaction surface between S4 and S5 is involved in control of translational fidelity.

In terms of biological role, one of the primary rRNA binding proteins, it binds directly to 16S rRNA where it nucleates assembly of the body of the 30S subunit. Its function is as follows. With S5 and S12 plays an important role in translational accuracy. This Novosphingobium aromaticivorans (strain ATCC 700278 / DSM 12444 / CCUG 56034 / CIP 105152 / NBRC 16084 / F199) protein is Small ribosomal subunit protein uS4.